A 118-amino-acid polypeptide reads, in one-letter code: Altered inheritance of mitochondria protein 26, mitochondrial (118 aa).

A run of 3 helical transmembrane segments spans residues 7–27, 41–61, and 98–118; these read EHLLLSQLKGSFFLLLLAYFF, LAVTPGAITIAIAIATDSIPA, and FLFCLGSARFCISFPCFGLSI.

The protein resides in the mitochondrion membrane. Its function is as follows. Involved in selective mitochondria autophagy (mitophagy). The chain is Altered inheritance of mitochondria protein 26, mitochondrial (AIM26) from Saccharomyces cerevisiae (strain ATCC 204508 / S288c) (Baker's yeast).